Reading from the N-terminus, the 173-residue chain is CASP-like protein 3A1 (173 aa).

A topological domain (cytoplasmic) is located at residue Met-1. Residues 2 to 22 (VDIALRSAVVAFMVVSLSAMF) form a helical membrane-spanning segment. Residues 23-48 (TSTQHSEVHIIGFSIPVSLRWNRSQP) are Extracellular-facing. An N-linked (GlcNAc...) asparagine glycan is attached at Asn-44. The helical transmembrane segment at 49-69 (FEFLVVVELLICAYAFVQFVY) threads the bilayer. Over 70–84 (QSVVLAKNAVPTRRC) the chain is Cytoplasmic. The chain crosses the membrane as a helical span at residues 85–105 (IWVQLAADQVCAYLVLAAAAA). Residues 106–140 (AAGASRTNKSGFQSLGMQNIKVPGVCIVLDKFCNR) lie on the Extracellular side of the membrane. Asn-113 is a glycosylation site (N-linked (GlcNAc...) asparagine). The helical transmembrane segment at 141 to 161 (ATIAIIFTLLAAGASGISVTL) threads the bilayer. At 162–173 (DVYMLTLTYYMG) the chain is on the cytoplasmic side.

Belongs to the Casparian strip membrane proteins (CASP) family. Homodimer and heterodimers.

The protein resides in the cell membrane. This Pteridium aquilinum subsp. aquilinum (Bracken fern) protein is CASP-like protein 3A1.